The following is a 190-amino-acid chain: MLLSDRDLRAEISSGRLGIDPFDDTLVQPSSIDVRLDCLFRVFNNTRYTHIDPAKQQDELTSLVQPVDGEPFVLHPGEFVLGSTLELFTLPDNLAGRLEGKSSLGRLGLLTHSTAGFIDPGFSGHITLELSNVANLPITLWPGMKIGQLCMLRLTSPSEHPYGSSRAGSKYQGQRGPTPSRSYQNFIRST.

DCTP-binding positions include 101–106 (KSSLGR), D119, 127–129 (TLE), Q148, Y162, K170, and Q174. The active-site Proton donor/acceptor is the E129. The interval 160-190 (HPYGSSRAGSKYQGQRGPTPSRSYQNFIRST) is disordered. The segment covering 171–190 (YQGQRGPTPSRSYQNFIRST) has biased composition (polar residues).

This sequence belongs to the dCTP deaminase family. In terms of assembly, homotrimer.

The enzyme catalyses dCTP + 2 H2O = dUMP + NH4(+) + diphosphate. It participates in pyrimidine metabolism; dUMP biosynthesis; dUMP from dCTP: step 1/1. Its function is as follows. Bifunctional enzyme that catalyzes both the deamination of dCTP to dUTP and the hydrolysis of dUTP to dUMP without releasing the toxic dUTP intermediate. The chain is dCTP deaminase, dUMP-forming from Mycobacterium tuberculosis (strain ATCC 25177 / H37Ra).